A 438-amino-acid polypeptide reads, in one-letter code: 23S rRNA (uracil(1939)-C(5))-methyltransferase RlmD (438 aa).

The TRAM domain maps to 10-69; the sequence is KASVNTKHLSVDVVRLDHNGAGIAFVDKKPVFIEGALPGEKAIIQFIEQKKQFSRAKLIK. [4Fe-4S] cluster contacts are provided by C82, C88, C91, and C169. Residues Q272, F301, N306, E322, N349, and D370 each coordinate S-adenosyl-L-methionine. C396 serves as the catalytic Nucleophile.

This sequence belongs to the class I-like SAM-binding methyltransferase superfamily. RNA M5U methyltransferase family. RlmD subfamily.

The enzyme catalyses uridine(1939) in 23S rRNA + S-adenosyl-L-methionine = 5-methyluridine(1939) in 23S rRNA + S-adenosyl-L-homocysteine + H(+). In terms of biological role, catalyzes the formation of 5-methyl-uridine at position 1939 (m5U1939) in 23S rRNA. The sequence is that of 23S rRNA (uracil(1939)-C(5))-methyltransferase RlmD from Aliivibrio fischeri (strain MJ11) (Vibrio fischeri).